Here is a 262-residue protein sequence, read N- to C-terminus: Octanoyltransferase (262 aa).

A BPL/LPL catalytic domain is found at 60–248; that stretch reads GTADELVWLV…AFEMVFGPTR (189 aa). Substrate is bound by residues 99–106, 179–181, and 192–194; these read RGGEYTYH, AIG, and GLS. Residue Cys210 is the Acyl-thioester intermediate of the active site.

The protein belongs to the LipB family.

The protein localises to the cytoplasm. The enzyme catalyses octanoyl-[ACP] + L-lysyl-[protein] = N(6)-octanoyl-L-lysyl-[protein] + holo-[ACP] + H(+). It participates in protein modification; protein lipoylation via endogenous pathway; protein N(6)-(lipoyl)lysine from octanoyl-[acyl-carrier-protein]: step 1/2. Catalyzes the transfer of endogenously produced octanoic acid from octanoyl-acyl-carrier-protein onto the lipoyl domains of lipoate-dependent enzymes. Lipoyl-ACP can also act as a substrate although octanoyl-ACP is likely to be the physiological substrate. This is Octanoyltransferase from Sinorhizobium medicae (strain WSM419) (Ensifer medicae).